Here is a 281-residue protein sequence, read N- to C-terminus: Inhibitor of growth protein 2 (281 aa).

Residues 49-101 (VLRELDNKYQETLKEIDDVYEKYKKEDDSNQKKRLQQHLQRALINSQELGDEK) are a coiled coil. Positions 123-204 (SQCFQDPAES…AKQEREASPV (82 aa)) are disordered. Basic and acidic residues predominate over residues 131-141 (ESERASDKSKM). Positions 182–194 (KRSKSAKKKKRSK) are enriched in basic residues. Residue Lys-196 forms a Glycyl lysine isopeptide (Lys-Gly) (interchain with G-Cter in SUMO1) linkage. Residues 213 to 262 (PTYCLCNQVSYGEMIGCDNEQCPIEWFHFSCVSLTYKPKGKWYCPKCRGD) form a PHD-type zinc finger. Residues Cys-216, Cys-218, Cys-229, Cys-234, His-240, Cys-243, Cys-256, and Cys-259 each contribute to the Zn(2+) site. Positions 261–275 (GDNEKTMDKSTEKTK) are enriched in basic and acidic residues. A disordered region spans residues 261 to 281 (GDNEKTMDKSTEKTKKERRAR). The segment at 265–281 (KTMDKSTEKTKKERRAR) is PBR.

The protein belongs to the ING family. As to quaternary structure, interacts with H3K4me3 and to a lesser extent with H3K4me2. Component of a mSin3A-like complex at least consisting of SIN3A, HDAC1, HDAC2, RBBP4/RbAp48, RBBP7/RbAp46, SAP30 and ING2. In terms of processing, sumoylation enhances its association with SIN3A and is required for binding to some target gene promoters, this is the case for TMEM71.

It localises to the nucleus. Seems to be involved in p53/TP53 activation and p53/TP53-dependent apoptotic pathways, probably by enhancing acetylation of p53/TP53. Component of a mSin3A-like corepressor complex, which is probably involved in deacetylation of nucleosomal histones. ING2 activity seems to be modulated by binding to phosphoinositides (PtdInsPs). This is Inhibitor of growth protein 2 (Ing2) from Mus musculus (Mouse).